The sequence spans 147 residues: Acidic phospholipase A2 beta-bungarotoxin A3 chain (147 aa).

A signal peptide spans 1–19 (MYPAHLLVLSAVCVSLLGA). Residues 20 to 27 (ANIPPHPL) constitute a propeptide that is removed on maturation. 6 disulfides stabilise this stretch: C54/C146, C56/C72, C71/C127, C78/C120, C88/C113, and C106/C118. Ca(2+)-binding residues include Y55, G57, and G59. H75 is a catalytic residue. D76 lines the Ca(2+) pocket. D121 is a catalytic residue.

Belongs to the phospholipase A2 family. Group I subfamily. D49 sub-subfamily. Heterodimer; disulfide-linked. The A chains have phospholipase A2 activity and the B chains show homology with the basic protease inhibitors. The A3 chain is found in beta-5 bungarotoxins. Ca(2+) serves as cofactor. As to expression, expressed by the venom gland.

The protein localises to the secreted. It carries out the reaction a 1,2-diacyl-sn-glycero-3-phosphocholine + H2O = a 1-acyl-sn-glycero-3-phosphocholine + a fatty acid + H(+). Functionally, snake venom phospholipase A2 (PLA2) that inhibits neuromuscular transmission by blocking acetylcholine release from the nerve termini. PLA2 catalyzes the calcium-dependent hydrolysis of the 2-acyl groups in 3-sn-phosphoglycerides. This chain is Acidic phospholipase A2 beta-bungarotoxin A3 chain, found in Bungarus multicinctus (Many-banded krait).